Reading from the N-terminus, the 276-residue chain is Protein canopy homolog 3 (276 aa).

The signal sequence occupies residues 1-16 (MNVFISVVLFLGSARA). The Saposin B-type domain occupies 30-269 (NKCEVCKFVS…EEEIQKKVPL (240 aa)). 3 disulfide bridges follow: cysteine 32/cysteine 190, cysteine 35/cysteine 178, and cysteine 88/cysteine 150. Residues 137–162 (NETSAEVADLKKQCDVMVEQYEDVIE) adopt a coiled-coil conformation. Residues 206-276 (AEDKKKKKGK…VPLNQPKTEL (71 aa)) are disordered. Basic residues-rich tracts occupy residues 210 to 219 (KKKKGKKKKG) and 228 to 239 (KEKKVKKKKKKS). The segment covering 240–252 (KISDSESSKRRME) has biased composition (basic and acidic residues).

Belongs to the canopy family.

It localises to the endoplasmic reticulum. In terms of biological role, toll-like receptor (TLR)-specific co-chaperone for HSP90B1. Required for proper TLR folding and hence controls TLR exit from the endoplasmic reticulum. Consequently, required for immune responses. This is Protein canopy homolog 3 (cnpy3) from Danio rerio (Zebrafish).